Consider the following 294-residue polypeptide: Glutamyl-Q tRNA(Asp) synthetase (294 aa).

L-glutamate is bound by residues 7 to 11 (RFAPS) and Glu43. The short motif at 10 to 20 (PSPSGPLHFGS) is the 'HIGH' region element. Cys99, Cys101, Tyr113, and Cys117 together coordinate Zn(2+). L-glutamate is bound by residues Tyr168 and Arg186. The 'KMSKS' region signature appears at 224 to 228 (KLSKQ). Lys227 lines the ATP pocket.

The protein belongs to the class-I aminoacyl-tRNA synthetase family. GluQ subfamily. Zn(2+) is required as a cofactor.

In terms of biological role, catalyzes the tRNA-independent activation of glutamate in presence of ATP and the subsequent transfer of glutamate onto a tRNA(Asp). Glutamate is transferred on the 2-amino-5-(4,5-dihydroxy-2-cyclopenten-1-yl) moiety of the queuosine in the wobble position of the QUC anticodon. This Vibrio parahaemolyticus serotype O3:K6 (strain RIMD 2210633) protein is Glutamyl-Q tRNA(Asp) synthetase.